Consider the following 750-residue polypeptide: Photosystem I P700 chlorophyll a apoprotein A1 (750 aa).

A run of 8 helical transmembrane segments spans residues 70-93 (VFSA…FHGA), 156-179 (LYST…FHYH), 195-219 (LNHH…HVSL), 291-309 (TAHH…GHMY), 346-369 (WHAQ…HHMY), 385-411 (LSLF…IFMV), 433-455 (AIIS…LYIH), and 531-549 (FLVH…LILL). [4Fe-4S] cluster-binding residues include C573 and C582. 2 helical membrane passes run 589–610 (HVFL…HFSW) and 664–686 (LSAY…MFLF). Residue H675 coordinates chlorophyll a'. Residues M683 and Y691 each contribute to the chlorophyll a site. Residue W692 coordinates phylloquinone. Residues 724-744 (AVGVAHYLLGGIATTWAFFLA) traverse the membrane as a helical segment.

Belongs to the PsaA/PsaB family. As to quaternary structure, the PsaA/B heterodimer binds the P700 chlorophyll special pair and subsequent electron acceptors. PSI consists of a core antenna complex that captures photons, and an electron transfer chain that converts photonic excitation into a charge separation. The eukaryotic PSI reaction center is composed of at least 11 subunits. The cofactor is P700 is a chlorophyll a/chlorophyll a' dimer, A0 is one or more chlorophyll a, A1 is one or both phylloquinones and FX is a shared 4Fe-4S iron-sulfur center..

Its subcellular location is the plastid. The protein resides in the chloroplast thylakoid membrane. The catalysed reaction is reduced [plastocyanin] + hnu + oxidized [2Fe-2S]-[ferredoxin] = oxidized [plastocyanin] + reduced [2Fe-2S]-[ferredoxin]. In terms of biological role, psaA and PsaB bind P700, the primary electron donor of photosystem I (PSI), as well as the electron acceptors A0, A1 and FX. PSI is a plastocyanin-ferredoxin oxidoreductase, converting photonic excitation into a charge separation, which transfers an electron from the donor P700 chlorophyll pair to the spectroscopically characterized acceptors A0, A1, FX, FA and FB in turn. Oxidized P700 is reduced on the lumenal side of the thylakoid membrane by plastocyanin. This Anthoceros angustus (Hornwort) protein is Photosystem I P700 chlorophyll a apoprotein A1.